Here is a 371-residue protein sequence, read N- to C-terminus: uncharacterized protein (371 aa).

33-40 contacts ATP; sequence GPLNSGKT.

It belongs to the archaeal ATPase family.

This is an uncharacterized protein from Methanocaldococcus jannaschii (strain ATCC 43067 / DSM 2661 / JAL-1 / JCM 10045 / NBRC 100440) (Methanococcus jannaschii).